Reading from the N-terminus, the 407-residue chain is Tryptophan synthase beta chain (407 aa).

An N6-(pyridoxal phosphate)lysine modification is found at Lys-91.

The protein belongs to the TrpB family. In terms of assembly, tetramer of two alpha and two beta chains. The cofactor is pyridoxal 5'-phosphate.

The enzyme catalyses (1S,2R)-1-C-(indol-3-yl)glycerol 3-phosphate + L-serine = D-glyceraldehyde 3-phosphate + L-tryptophan + H2O. The protein operates within amino-acid biosynthesis; L-tryptophan biosynthesis; L-tryptophan from chorismate: step 5/5. In terms of biological role, the beta subunit is responsible for the synthesis of L-tryptophan from indole and L-serine. This chain is Tryptophan synthase beta chain, found in Streptococcus pneumoniae (strain Taiwan19F-14).